A 323-amino-acid chain; its full sequence is Olfactory receptor 6T1 (323 aa).

Over 1–25 (MNPENWTQVTSFVLLGFPSSHLIQF) the chain is Extracellular. An N-linked (GlcNAc...) asparagine glycan is attached at Asn5. Residues 26–46 (LVFLGLMVTYIVTATGKLLII) traverse the membrane as a helical segment. Topologically, residues 47-54 (VLSWIDQR) are cytoplasmic. The chain crosses the membrane as a helical span at residues 55–75 (LHIQMYFFLRNFSFLELLLVT). Residues 76-99 (VVVPKMLVVILTGDHTISFVSCII) are Extracellular-facing. Cysteines 97 and 189 form a disulfide. The helical transmembrane segment at 100-120 (QSYLYFFLGTTDFFLLAVMSL) threads the bilayer. Residues 121 to 139 (DRYLAICRPLRYETLMNGH) are Cytoplasmic-facing. The helical transmembrane segment at 140–160 (VCSQLVLASWLAGFLWVLCPT) threads the bilayer. Topologically, residues 161–197 (VLMASLPFCGPNGIDHFFRDSWPLLRLSCGDTHLLKL) are extracellular. Residues 198-217 (VAFMLSTLVLLGSLALTSVS) traverse the membrane as a helical segment. Residues 218 to 237 (YACILATVLRAPTAAERRKA) lie on the Cytoplasmic side of the membrane. A helical membrane pass occupies residues 238–258 (FSTCASHLTVVVIIYGSSIFL). At 259-271 (YIRMSEAQSKLLN) the chain is on the extracellular side. Residues 272–292 (KGASVLSCIITPLLNPFIFTL) traverse the membrane as a helical segment. Residues 293–323 (RNDKVQQALREALGWPRLTAVMKLRVTSQRK) are Cytoplasmic-facing.

Belongs to the G-protein coupled receptor 1 family.

The protein localises to the cell membrane. Functionally, odorant receptor. The protein is Olfactory receptor 6T1 (OR6T1) of Homo sapiens (Human).